The following is a 632-amino-acid chain: Probable membrane transporter protein MamO (632 aa).

Residues 25 to 45 (APVSILAFLILVTFAWGAYLL) traverse the membrane as a helical segment. The tract at residues 78–268 (LYYTVPPAVV…VIVSHLQDVV (191 aa)) is protease-like. Residues His-148 and His-263 each contribute to the a divalent metal cation site. Helical transmembrane passes span 340–360 (IGGYSIADILGLGMLALAAGV), 412–432 (LVQWDKVKPLIPWGVAGVVIG), 434–454 (FIGNAIGDSVVGVLLGLFALI), 513–533 (AVLGLPMGLFSGILGISGGVI), 550–570 (IANSSVLVFWASVAGSVVAFI), 582–602 (APVTLALVMIPGAYVGGILGA), and 612–632 (VLKGIYAATMAAIAIKMLTTV). A TSUP-like region spans residues 365–632 (MTMGGGVLQV…AIAIKMLTTV (268 aa)).

The protein in the N-terminal section; belongs to the peptidase S1C family. In the C-terminal section; belongs to the 4-toluene sulfonate uptake permease (TSUP) (TC 2.A.102) family. A metal cation is required as a cofactor. Post-translationally, subject to proteolytic cleavage by MamE.

It localises to the magnetosome membrane. In terms of biological role, plays 2 roles; promotes magnetite nucleation/formation and activates the MamE protease. Despite its near conservation of a protease-like sequence, this is probably not a protease. Required in conjunction with MamP for proteolysis of at least MamE, itself and MamP. May transport a solute that controls MamE's protease activity. May place individual iron atoms into the magnetite lattice. One of 7 genes (mamLQBIEMO) able to induce magnetosome membrane biogenesis; coexpression of mamLQRBIEMO in a deletion of the 17 gene mamAB operon restores magnetosome vesicle formation but not magnetite biosynthesis. This chain is Probable membrane transporter protein MamO, found in Magnetospirillum gryphiswaldense (strain DSM 6361 / JCM 21280 / NBRC 15271 / MSR-1).